A 110-amino-acid polypeptide reads, in one-letter code: Urease subunit beta (110 aa).

The protein belongs to the urease beta subunit family. Heterotrimer of UreA (gamma), UreB (beta) and UreC (alpha) subunits. Three heterotrimers associate to form the active enzyme.

The protein localises to the cytoplasm. The enzyme catalyses urea + 2 H2O + H(+) = hydrogencarbonate + 2 NH4(+). Its pathway is nitrogen metabolism; urea degradation; CO(2) and NH(3) from urea (urease route): step 1/1. In Pseudoalteromonas translucida (strain TAC 125), this protein is Urease subunit beta.